A 681-amino-acid chain; its full sequence is MRQPLLKLAAVTRRFPAGDKDVVVLNNVNLSIGAGEIVAIVGASGSGKSTLMNILGCLDHPSEGTYTVGGRDTHMLDSDELAQLRREHFGFVFQRYHLLPHVDAVANLEMPAIYAGTPRADRHARARELLARLGLADRAHHRPGQLSGGQQQRVSIARALMNGGQVILADEPTGALDTKSGQDVIRILHELNALGHTIVIVTHDKAVARHARRIIEISDGEIVADRPNRHYAEAFAEVGVGAAATTETAADTRSAPASGDAPPPANNDTAADPAPRARRFAAGTGRFAEACRMAWIALVSHRLRTLLTMLGIIIGITSVVSIVAVGEGAKRYMLEEIGSIGTNTISLYPGSDWGDSRADTIQTLVPADVAALAEQPYVDSATPETSRTLLLRYRNVDVHALVSGVGDSYFQTRGMRFALGVPFDDDAVRRQAQVAVIDQNTRRKLFGATRNPVGEAILVDNVPCVVIGVTADKKSAFGSVKSLNVWVPYTTASGRLFGQRYLDSITVRVRDGQPSAAAEKSLEKLMIQRHGRKDFFTYNMDSVVKTVEKTGQSLTLLLSLIAVISLVVGGIGVMNIMLVSVTERTREIGIRMAVGARQSDILQQFLVEAVLVCLLGGTIGIALSFGLGALFSVFVAQWKMVFSAGAIVTAFVCSTLTGVIFGFMPARNASRLDPIDALARD.

The 239-residue stretch at 6-244 folds into the ABC transporter domain; it reads LKLAAVTRRF…FAEVGVGAAA (239 aa). 42-49 lines the ATP pocket; that stretch reads GASGSGKS. Residues 246-274 form a disordered region; sequence TETAADTRSAPASGDAPPPANNDTAADPA. The next 4 helical transmembrane spans lie at 306-326, 554-574, 611-631, and 644-664; these read LLTMLGIIIGITSVVSIVAVG, LTLLLSLIAVISLVVGGIGVM, LVCLLGGTIGIALSFGLGALF, and AGAIVTAFVCSTLTGVIFGFM.

This sequence belongs to the ABC transporter superfamily. Macrolide exporter (TC 3.A.1.122) family. In terms of assembly, homodimer.

The protein localises to the cell inner membrane. In terms of biological role, non-canonical ABC transporter that contains transmembrane domains (TMD), which form a pore in the inner membrane, and an ATP-binding domain (NBD), which is responsible for energy generation. Confers resistance against macrolides. The chain is Macrolide export ATP-binding/permease protein MacB from Burkholderia cenocepacia (strain HI2424).